The sequence spans 279 residues: Shikimate dehydrogenase (NADP(+)) (279 aa).

Residues 19–21 and T66 each bind shikimate; that span reads SRS. K70 functions as the Proton acceptor in the catalytic mechanism. The shikimate site is built by N91 and D106. NADP(+) is bound by residues 129-133, 152-157, and I218; these read GAGGA and NRTLER. Y220 is a shikimate binding site. G241 is an NADP(+) binding site.

This sequence belongs to the shikimate dehydrogenase family. As to quaternary structure, homodimer.

The catalysed reaction is shikimate + NADP(+) = 3-dehydroshikimate + NADPH + H(+). It participates in metabolic intermediate biosynthesis; chorismate biosynthesis; chorismate from D-erythrose 4-phosphate and phosphoenolpyruvate: step 4/7. Functionally, involved in the biosynthesis of the chorismate, which leads to the biosynthesis of aromatic amino acids. Catalyzes the reversible NADPH linked reduction of 3-dehydroshikimate (DHSA) to yield shikimate (SA). This Gluconobacter oxydans (strain 621H) (Gluconobacter suboxydans) protein is Shikimate dehydrogenase (NADP(+)).